Consider the following 417-residue polypeptide: Mitochondrial tRNA-specific 2-thiouridylase 1 (417 aa).

ATP-binding positions include 32-39 (AMSSGVDS) and M58. The interaction with target base in tRNA stretch occupies residues 122–124 (NPD). The Nucleophile role is filled by C127. Residues C127 and C229 are joined by a disulfide bond. G154 is an ATP binding site. Residues 179 to 181 (KDQ) form an interaction with tRNA region. C229 acts as the Cysteine persulfide intermediate in catalysis. The interval 354 to 355 (RS) is interaction with tRNA.

The protein belongs to the MnmA/TRMU family.

The protein resides in the mitochondrion. The enzyme catalyses 5-taurinomethyluridine(34) in tRNA + S-sulfanyl-L-cysteinyl-[protein] + AH2 + ATP = 5-taurinomethyl-2-thiouridine(34) in tRNA + L-cysteinyl-[protein] + A + AMP + diphosphate + H(+). Catalyzes the 2-thiolation of uridine at the wobble position (U34) of mitochondrial tRNA(Lys), tRNA(Glu) and tRNA(Gln). Required for the formation of 5-taurinomethyl-2-thiouridine (tm5s2U) of mitochondrial tRNA(Lys), tRNA(Glu), and tRNA(Gln) at the wobble position. ATP is required to activate the C2 atom of the wobble base. The polypeptide is Mitochondrial tRNA-specific 2-thiouridylase 1 (SLM3) (Saccharomyces cerevisiae (strain ATCC 204508 / S288c) (Baker's yeast)).